The chain runs to 336 residues: GTPase Obg (336 aa).

The region spanning 1-159 (MKFIDEATII…RRLQLELILL (159 aa)) is the Obg domain. In terms of domain architecture, OBG-type G spans 160 to 333 (ADVGLLGLPN…LCRDIMLFIN (174 aa)). GTP is bound by residues 166–173 (GLPNVGKS), 191–195 (FTTLV), 213–216 (DIPG), 283–286 (NKLD), and 314–316 (SAM). Residues Ser173 and Thr193 each contribute to the Mg(2+) site.

The protein belongs to the TRAFAC class OBG-HflX-like GTPase superfamily. OBG GTPase family. As to quaternary structure, monomer. The cofactor is Mg(2+).

The protein localises to the cytoplasm. Functionally, an essential GTPase which binds GTP, GDP and possibly (p)ppGpp with moderate affinity, with high nucleotide exchange rates and a fairly low GTP hydrolysis rate. Plays a role in control of the cell cycle, stress response, ribosome biogenesis and in those bacteria that undergo differentiation, in morphogenesis control. The polypeptide is GTPase Obg (Baumannia cicadellinicola subsp. Homalodisca coagulata).